A 605-amino-acid chain; its full sequence is Putative glutaminase 2 (605 aa).

Positions 213, 262, 308, 315, 342, 394, and 412 each coordinate substrate. ANK repeat units follow at residues 480 to 509 (DRLIPVFHVARAGDLPTMRRLYMQGEDLNT) and 513 to 543 (DDRTVLHIAATEGYETMIKFLVNVAKVDVDK). Basic and acidic residues predominate over residues 569–581 (KAMKRPEQHRKDS). The tract at residues 569–605 (KAMKRPEQHRKDSVSSLDTDDEIDDDGFPEKPSFTID) is disordered. Over residues 586–595 (DTDDEIDDDG) the composition is skewed to acidic residues.

The protein belongs to the glutaminase family.

It carries out the reaction L-glutamine + H2O = L-glutamate + NH4(+). The protein is Putative glutaminase 2 (glna-2) of Caenorhabditis elegans.